The sequence spans 376 residues: Putative F-box protein At3g18330 (376 aa).

In terms of domain architecture, F-box spans 1 to 46 (MPMPNLPKELVEEILSFVPATYLKRLSATCKPWNRLIHNDKRFARK).

The polypeptide is Putative F-box protein At3g18330 (Arabidopsis thaliana (Mouse-ear cress)).